A 365-amino-acid polypeptide reads, in one-letter code: Histidinol-phosphate aminotransferase (365 aa).

N6-(pyridoxal phosphate)lysine is present on Lys-220.

This sequence belongs to the class-II pyridoxal-phosphate-dependent aminotransferase family. Histidinol-phosphate aminotransferase subfamily. In terms of assembly, homodimer. The cofactor is pyridoxal 5'-phosphate.

It carries out the reaction L-histidinol phosphate + 2-oxoglutarate = 3-(imidazol-4-yl)-2-oxopropyl phosphate + L-glutamate. It functions in the pathway amino-acid biosynthesis; L-histidine biosynthesis; L-histidine from 5-phospho-alpha-D-ribose 1-diphosphate: step 7/9. This Neisseria meningitidis serogroup A / serotype 4A (strain DSM 15465 / Z2491) protein is Histidinol-phosphate aminotransferase.